The primary structure comprises 303 residues: Enoyl-CoA hydratase domain-containing protein 3, mitochondrial (303 aa).

Residues 1 to 17 (MAAVAVLRAFGASGPMC) constitute a mitochondrion transit peptide. At Lys-110 the chain carries N6-succinyllysine.

Belongs to the enoyl-CoA hydratase/isomerase family. Expressed in adipocytes. Expressed in blood cells, with higher expression in patients with low coronary lesions.

Its subcellular location is the mitochondrion. May play a role in fatty acid biosynthesis and insulin sensitivity. This Homo sapiens (Human) protein is Enoyl-CoA hydratase domain-containing protein 3, mitochondrial.